We begin with the raw amino-acid sequence, 72 residues long: UPF0154 protein RBAM_017710 (72 aa).

Residues 4-24 (WVGILVGVVALLIGVALGFFI) form a helical membrane-spanning segment.

Belongs to the UPF0154 family.

It localises to the cell membrane. This Bacillus velezensis (strain DSM 23117 / BGSC 10A6 / LMG 26770 / FZB42) (Bacillus amyloliquefaciens subsp. plantarum) protein is UPF0154 protein RBAM_017710.